The following is a 194-amino-acid chain: Outer surface 22 kDa lipoprotein (194 aa).

The signal sequence occupies residues 1–21 (MYKNGFFKNYLSLLLIFLVIA). Cysteine 22 carries N-palmitoyl cysteine lipidation. The S-diacylglycerol cysteine moiety is linked to residue cysteine 22.

The protein resides in the cell outer membrane. The chain is Outer surface 22 kDa lipoprotein (p22) from Borreliella burgdorferi (strain N40) (Borrelia burgdorferi).